We begin with the raw amino-acid sequence, 705 residues long: Ribosomal RNA large subunit methyltransferase K/L (705 aa).

The 112-residue stretch at 43 to 154 (VVYRCCLWSR…GEKGILGFDL (112 aa)) folds into the THUMP domain.

The protein belongs to the methyltransferase superfamily. RlmKL family.

The protein resides in the cytoplasm. It catalyses the reaction guanosine(2445) in 23S rRNA + S-adenosyl-L-methionine = N(2)-methylguanosine(2445) in 23S rRNA + S-adenosyl-L-homocysteine + H(+). The enzyme catalyses guanosine(2069) in 23S rRNA + S-adenosyl-L-methionine = N(2)-methylguanosine(2069) in 23S rRNA + S-adenosyl-L-homocysteine + H(+). Functionally, specifically methylates the guanine in position 2445 (m2G2445) and the guanine in position 2069 (m7G2069) of 23S rRNA. This is Ribosomal RNA large subunit methyltransferase K/L from Aliivibrio salmonicida (strain LFI1238) (Vibrio salmonicida (strain LFI1238)).